Here is a 314-residue protein sequence, read N- to C-terminus: Aspartate carbamoyltransferase catalytic subunit (314 aa).

2 residues coordinate carbamoyl phosphate: Arg-55 and Thr-56. Residue Lys-83 participates in L-aspartate binding. Residues Arg-105, His-139, and Gln-142 each coordinate carbamoyl phosphate. Residues Arg-172 and Arg-226 each coordinate L-aspartate. Carbamoyl phosphate is bound by residues Gly-267 and Pro-268.

It belongs to the aspartate/ornithine carbamoyltransferase superfamily. ATCase family. As to quaternary structure, heterododecamer (2C3:3R2) of six catalytic PyrB chains organized as two trimers (C3), and six regulatory PyrI chains organized as three dimers (R2).

It catalyses the reaction carbamoyl phosphate + L-aspartate = N-carbamoyl-L-aspartate + phosphate + H(+). Its pathway is pyrimidine metabolism; UMP biosynthesis via de novo pathway; (S)-dihydroorotate from bicarbonate: step 2/3. Catalyzes the condensation of carbamoyl phosphate and aspartate to form carbamoyl aspartate and inorganic phosphate, the committed step in the de novo pyrimidine nucleotide biosynthesis pathway. This chain is Aspartate carbamoyltransferase catalytic subunit, found in Rhodococcus jostii (strain RHA1).